The sequence spans 520 residues: Glucose starvation modulator protein 1 (520 aa).

The zn(2)-C6 fungal-type DNA-binding region spans 20–48 (CSFCHSKHLQCSNNRPCKNCVKRNIADQC). Disordered regions lie at residues 63 to 104 (AKNK…SSGR) and 194 to 213 (PASPTPSSTSEYQTIPPNEM). Low complexity predominate over residues 74–85 (SLESSSSPFSPL). Residues 90-104 (INSQSSQPLDPSSGR) are compositionally biased toward polar residues. The region spanning 376-445 (DYEKLSHLNS…FKLFKSVAVG (70 aa)) is the PAS domain.

It belongs to the ERT1/acuK family.

It localises to the nucleus. Functionally, transcription factor which regulates nonfermentable carbon utilization. The polypeptide is Glucose starvation modulator protein 1 (GSM1) (Meyerozyma guilliermondii (strain ATCC 6260 / CBS 566 / DSM 6381 / JCM 1539 / NBRC 10279 / NRRL Y-324) (Yeast)).